Consider the following 658-residue polypeptide: NADH-ubiquinone oxidoreductase chain 5 (658 aa).

Helical transmembrane passes span 4–23, 30–52, 81–103, 112–129, 133–155, 168–190, 200–222, 243–262, 272–294, 301–319, 329–351, 364–386, 409–431, 452–471, 505–527, 607–629, and 639–656; these read TLIV…GRKI, IITC…EVGI, LTVS…SISY, RFFS…ILVT, YLLM…NFWF, LLTN…WSFG, LAPY…GATA, VSAL…LLMR, TVLI…IGLF, VIAY…GIGL, LVNH…HSVA, PFLP…VPFM, IVYF…VLYL, LFLN…FGFL, VPVL…SILY, LSTG…YIST, and LLIL…NKLL.

This sequence belongs to the complex I subunit 5 family.

Its subcellular location is the mitochondrion inner membrane. It catalyses the reaction a ubiquinone + NADH + 5 H(+)(in) = a ubiquinol + NAD(+) + 4 H(+)(out). Core subunit of the mitochondrial membrane respiratory chain NADH dehydrogenase (Complex I) that is believed to belong to the minimal assembly required for catalysis. Complex I functions in the transfer of electrons from NADH to the respiratory chain. The immediate electron acceptor for the enzyme is believed to be ubiquinone. The chain is NADH-ubiquinone oxidoreductase chain 5 (nad5) from Talaromyces marneffei (Penicillium marneffei).